The chain runs to 89 residues: Small ribosomal subunit protein uS19 (89 aa).

It belongs to the universal ribosomal protein uS19 family.

In terms of biological role, protein S19 forms a complex with S13 that binds strongly to the 16S ribosomal RNA. The chain is Small ribosomal subunit protein uS19 from Stenotrophomonas maltophilia (strain R551-3).